Reading from the N-terminus, the 92-residue chain is Small ribosomal subunit protein uS19 (92 aa).

Belongs to the universal ribosomal protein uS19 family.

Functionally, protein S19 forms a complex with S13 that binds strongly to the 16S ribosomal RNA. In Trichlorobacter lovleyi (strain ATCC BAA-1151 / DSM 17278 / SZ) (Geobacter lovleyi), this protein is Small ribosomal subunit protein uS19.